The sequence spans 345 residues: Nuclear distribution protein nudE-like 1 (345 aa).

Residues Q28–V190 adopt a coiled-coil conformation. The self-association stretch occupies residues V56–S166. An interaction with KATNB1 region spans residues D64 to E189. The tract at residues Y114 to I133 is required for interaction with PAFAH1B1. The segment at R175–V345 is interaction with CENPF. Residues E189–V256 are interaction with YWHAE. The tract at residues T191–V345 is interaction with NEFL. The tract at residues A195–V256 is interaction with KATNA1. S215 is modified (phosphoserine). Positions P217–G240 are disordered. At T219 the chain carries Phosphothreonine. Position 231 is a phosphoserine (S231). Positions T241–Q280 are interaction with DISC1. S242 carries the phosphoserine; by CDK1 modification. T245 is modified (phosphothreonine; by CDK1 and MAPK1). The required for localization to the centrosome and interaction with dynein, dynactin, tubulin gamma, PCM1 and PCNT stretch occupies residues V256–V291. C273 carries S-palmitoyl cysteine; by ZDHHC2, ZDHHC3 and ZDHHC7 lipidation. A disordered region spans residues K314 to V345. Over residues L329 to G339 the composition is skewed to low complexity. Phosphoserine is present on S344.

The protein belongs to the nudE family. In terms of assembly, interacts with PLEKHM1 (via N- and C-terminus). Interacts with dynactin, PCM1 and PCNT. Interacts (via C-terminus) with CENPF. Self-associates. Interacts with DISC1, dynein, tubulin gamma, KATNA1, KATNB1, microtubules, PAFAHB1 and YWHAE. Interacts directly with NEFL and indirectly with NEFH. Interacts with ZNF365. Interacts with GTP-bound RAB9A; the interaction may lead to RAB9A-dynein motor tethering. Post-translationally, phosphorylated by CDK1 and MAPK1. Phosphorylated in mitosis. Phosphorylated by CDK5. Phosphorylation by CDK5 promotes interaction with KATNA1 and YWHAE. Palmitoylation at Cys-273 reduces affinity for dynein. As to expression, expressed in brain, liver, lung and testis (at protein level). Expressed in brain, epididymis, eye, heart, kidney, large intestine, liver, ovary, pancreas, prostate, skeletal muscle, smooth muscle, spleen, submaxillary gland, testis, thymus and thyroid. Within the brain expression is pronounced in the cortex, hippocampus, olfactory bulb, striatum, thalamic and hypothalamic structures and in the molecular layer of the cerebellum. Largely excluded from cortical progenitor cells which express NDE1.

The protein localises to the cytoplasm. It localises to the cytoskeleton. It is found in the microtubule organizing center. Its subcellular location is the centrosome. The protein resides in the chromosome. The protein localises to the centromere. It localises to the kinetochore. It is found in the spindle. Its function is as follows. Required for organization of the cellular microtubule array and microtubule anchoring at the centrosome. May regulate microtubule organization at least in part by targeting the microtubule severing protein KATNA1 to the centrosome. Also positively regulates the activity of the minus-end directed microtubule motor protein dynein. May enhance dynein-mediated microtubule sliding by targeting dynein to the microtubule plus ends. Required for several dynein- and microtubule-dependent processes such as the maintenance of Golgi integrity, the centripetal motion of secretory vesicles and the coupling of the nucleus and centrosome. Also required during brain development for the migration of newly formed neurons from the ventricular/subventricular zone toward the cortical plate. Plays a role, together with DISC1, in the regulation of neurite outgrowth. Required for mitosis in some cell types but appears to be dispensible for mitosis in cortical neuronal progenitors, which instead requires NDE1. Facilitates the polymerization of neurofilaments from the individual subunits NEFH and NEFL. Positively regulates lysosome peripheral distribution and ruffled border formation in osteoclasts. Plays a role, together with DISC1, in the regulation of neurite outgrowth. May act as a RAB9A/B effector that tethers RAB9-associated late endosomes to the dynein motor for their retrograde transport to the trans-Golgi network. This chain is Nuclear distribution protein nudE-like 1, found in Mus musculus (Mouse).